Reading from the N-terminus, the 383-residue chain is MLRYLTAGESHGRGLSVIVEGLPAGVPLTDGDINTWLTRRQGGYGRGGRMAIERDQAEILAGVRGGLTLGSPIALFIANRDWENWQEIMAPGPEARAARVVTRPRPGHADLAGGLKYHQADLRNILERASARETAARVAAGAVAAVLLKELAIELAFHVVRIGPVEVREQVDWEAACRAVESPVYCADPEAGRAMVAAIEEARQQGDTLGGVVEVLARGVPAGLGSHVHWDRRLDGRLAQALMSIPAIKGVEIGAGFRVAALPGSRAHDAIAYRKGQGFYHPTNRAGGLEGGLTNGETLVLRAAMKPIPTLMHPLPSVDLVTKQPATASIERSDVCAVPAAAVVAAAAVAWVLAGAILEQFGGDYLPVIQERLAAYRQYLQEI.

NADP(+)-binding residues include arginine 40 and arginine 46. Residues arginine 128–serine 130, glycine 291, lysine 306–threonine 310, and arginine 332 contribute to the FMN site.

This sequence belongs to the chorismate synthase family. In terms of assembly, homotetramer. FMNH2 is required as a cofactor.

It carries out the reaction 5-O-(1-carboxyvinyl)-3-phosphoshikimate = chorismate + phosphate. It functions in the pathway metabolic intermediate biosynthesis; chorismate biosynthesis; chorismate from D-erythrose 4-phosphate and phosphoenolpyruvate: step 7/7. In terms of biological role, catalyzes the anti-1,4-elimination of the C-3 phosphate and the C-6 proR hydrogen from 5-enolpyruvylshikimate-3-phosphate (EPSP) to yield chorismate, which is the branch point compound that serves as the starting substrate for the three terminal pathways of aromatic amino acid biosynthesis. This reaction introduces a second double bond into the aromatic ring system. This is Chorismate synthase from Moorella thermoacetica (strain ATCC 39073 / JCM 9320).